The primary structure comprises 153 residues: MSQARTLHRLIAPAVEALGFELVGCELFRRGATTILQVFVDKPGGIGLDECAKVSRQISAVLDVEDPIRGRYTLEVSSPGLERPLYTANHYRRFIGNKAKIRLREPREGQRQFRGMIVAVDNEEQVTLQLDNKILKVSLGEIEKANLITDFEG.

The protein belongs to the RimP family.

Its subcellular location is the cytoplasm. Functionally, required for maturation of 30S ribosomal subunits. In Coxiella burnetii (strain CbuG_Q212) (Coxiella burnetii (strain Q212)), this protein is Ribosome maturation factor RimP.